The chain runs to 184 residues: ATP synthase subunit b, chloroplastic (184 aa).

A helical transmembrane segment spans residues 27-49 (LATNLINLSVVLGVLIFFGKGVL).

Belongs to the ATPase B chain family. In terms of assembly, F-type ATPases have 2 components, F(1) - the catalytic core - and F(0) - the membrane proton channel. F(1) has five subunits: alpha(3), beta(3), gamma(1), delta(1), epsilon(1). F(0) has four main subunits: a(1), b(1), b'(1) and c(10-14). The alpha and beta chains form an alternating ring which encloses part of the gamma chain. F(1) is attached to F(0) by a central stalk formed by the gamma and epsilon chains, while a peripheral stalk is formed by the delta, b and b' chains.

Its subcellular location is the plastid. The protein resides in the chloroplast thylakoid membrane. Its function is as follows. F(1)F(0) ATP synthase produces ATP from ADP in the presence of a proton or sodium gradient. F-type ATPases consist of two structural domains, F(1) containing the extramembraneous catalytic core and F(0) containing the membrane proton channel, linked together by a central stalk and a peripheral stalk. During catalysis, ATP synthesis in the catalytic domain of F(1) is coupled via a rotary mechanism of the central stalk subunits to proton translocation. In terms of biological role, component of the F(0) channel, it forms part of the peripheral stalk, linking F(1) to F(0). The protein is ATP synthase subunit b, chloroplastic of Nymphaea alba (White water-lily).